The chain runs to 281 residues: Cis-2,3-dihydrobiphenyl-2,3-diol dehydrogenase (281 aa).

NAD(+) is bound at residue 10–34 (ITGGASGLGRALVDRFVAEGARVAV). Serine 142 is a substrate binding site. Tyrosine 155 functions as the Proton acceptor in the catalytic mechanism.

It belongs to the short-chain dehydrogenases/reductases (SDR) family. As to quaternary structure, homotetramer.

The enzyme catalyses (2R,3S)-3-phenylcyclohexa-3,5-diene-1,2-diol + NAD(+) = biphenyl-2,3-diol + NADH + H(+). The protein operates within xenobiotic degradation; biphenyl degradation; 2-hydroxy-2,4-pentadienoate and benzoate from biphenyl: step 2/4. The sequence is that of Cis-2,3-dihydrobiphenyl-2,3-diol dehydrogenase (bphB) from Comamonas testosteroni (Pseudomonas testosteroni).